A 469-amino-acid polypeptide reads, in one-letter code: Reticulon-2 (469 aa).

Disordered stretches follow at residues 1 to 180 (MGQV…EASE) and 201 to 238 (LTPQ…NGEG). Positions 14–25 (APSTASSTPDST) are enriched in low complexity. Positions 32-43 (SDFRELHTAREF) are enriched in basic and acidic residues. A Phosphoserine modification is found at serine 44. A compositionally biased stretch (basic and acidic residues) spans 135–144 (RPLEELRLRL). Composition is skewed to polar residues over residues 159-168 (DSATSSSTPL) and 203-226 (PQLS…QDLN). A Reticulon domain is found at 270–469 (VADLLYWKDT…SVSGSKAKAE (200 aa)). 2 helical membrane passes run 293–313 (LLCL…LLGL) and 388–408 (LLFY…LVIL).

Interacts with SPAST. Interacts with BACE1. Interacts (via first transmembrane domain) with ARL6IP5/GTRAP3-18. Interacts (via N-terminus) with SLC1A1/EAAC1; the interaction promotes cell surface expression of SLC1A1. As to expression, expressed in brain and spinal cord (at protein level). In the embryonic brain cortex, expressed in neurons but not in astrocytes (at protein level).

The protein localises to the endoplasmic reticulum membrane. It localises to the sarcoplasmic reticulum membrane. The protein resides in the cell membrane. It is found in the sarcolemma. Its subcellular location is the T-tubule. The protein localises to the cytoplasm. It localises to the myofibril. The protein resides in the sarcomere. It is found in the z line. Its subcellular location is the cytoskeleton. Functionally, inhibits amyloid precursor protein processing, probably by blocking BACE1 activity. Enhances trafficking of the glutamate transporter SLC1A1/EAAC1 from the endoplasmic reticulum to the cell surface. Plays a role in the translocation of SLC2A4/GLUT4 from intracellular membranes to the cell membrane which facilitates the uptake of glucose into the cell. The sequence is that of Reticulon-2 from Rattus norvegicus (Rat).